We begin with the raw amino-acid sequence, 607 residues long: UvrABC system protein C (607 aa).

The 80-residue stretch at 15–94 folds into the GIY-YIG domain; sequence ENPGVYLMKN…IKRHRPYFNV (80 aa). The UVR domain occupies 204 to 239; sequence DQVLKLLIRLMNEASARLDYETAALRRDQIASIKEV.

Belongs to the UvrC family. As to quaternary structure, interacts with UvrB in an incision complex.

The protein localises to the cytoplasm. In terms of biological role, the UvrABC repair system catalyzes the recognition and processing of DNA lesions. UvrC both incises the 5' and 3' sides of the lesion. The N-terminal half is responsible for the 3' incision and the C-terminal half is responsible for the 5' incision. In Dehalococcoides mccartyi (strain CBDB1), this protein is UvrABC system protein C.